We begin with the raw amino-acid sequence, 230 residues long: Large ribosomal subunit protein uL1 (230 aa).

It belongs to the universal ribosomal protein uL1 family. Part of the 50S ribosomal subunit.

In terms of biological role, binds directly to 23S rRNA. The L1 stalk is quite mobile in the ribosome, and is involved in E site tRNA release. Functionally, protein L1 is also a translational repressor protein, it controls the translation of the L11 operon by binding to its mRNA. This is Large ribosomal subunit protein uL1 from Gluconobacter oxydans (strain 621H) (Gluconobacter suboxydans).